Here is a 352-residue protein sequence, read N- to C-terminus: Uroporphyrinogen decarboxylase (352 aa).

Substrate-binding positions include 26–30, aspartate 76, tyrosine 153, serine 208, and histidine 323; that span reads RQAGR.

The protein belongs to the uroporphyrinogen decarboxylase family. Homodimer.

The protein resides in the cytoplasm. It catalyses the reaction uroporphyrinogen III + 4 H(+) = coproporphyrinogen III + 4 CO2. The protein operates within porphyrin-containing compound metabolism; protoporphyrin-IX biosynthesis; coproporphyrinogen-III from 5-aminolevulinate: step 4/4. In terms of biological role, catalyzes the decarboxylation of four acetate groups of uroporphyrinogen-III to yield coproporphyrinogen-III. In Prochlorococcus marinus (strain MIT 9303), this protein is Uroporphyrinogen decarboxylase.